The primary structure comprises 212 residues: Pyridoxine/pyridoxamine 5'-phosphate oxidase (212 aa).

Residues arginine 8–tyrosine 11 and lysine 66 each bind substrate. FMN-binding positions include arginine 61–lysine 66, phenylalanine 76–threonine 77, arginine 82, lysine 83, and glutamine 105. Substrate is bound by residues tyrosine 123, arginine 127, and serine 131. Residues glutamine 140–serine 141 and tryptophan 185 each bind FMN. Arginine 191–histidine 193 is a binding site for substrate. Position 195 (arginine 195) interacts with FMN.

Belongs to the pyridoxamine 5'-phosphate oxidase family. Homodimer. It depends on FMN as a cofactor.

It catalyses the reaction pyridoxamine 5'-phosphate + O2 + H2O = pyridoxal 5'-phosphate + H2O2 + NH4(+). The enzyme catalyses pyridoxine 5'-phosphate + O2 = pyridoxal 5'-phosphate + H2O2. Its pathway is cofactor metabolism; pyridoxal 5'-phosphate salvage; pyridoxal 5'-phosphate from pyridoxamine 5'-phosphate: step 1/1. The protein operates within cofactor metabolism; pyridoxal 5'-phosphate salvage; pyridoxal 5'-phosphate from pyridoxine 5'-phosphate: step 1/1. Functionally, catalyzes the oxidation of either pyridoxine 5'-phosphate (PNP) or pyridoxamine 5'-phosphate (PMP) into pyridoxal 5'-phosphate (PLP). This is Pyridoxine/pyridoxamine 5'-phosphate oxidase from Shewanella denitrificans (strain OS217 / ATCC BAA-1090 / DSM 15013).